The primary structure comprises 160 residues: tRNA (cytidine(34)-2'-O)-methyltransferase (160 aa).

4 residues coordinate S-adenosyl-L-methionine: L78, G100, I122, and S130.

Belongs to the class IV-like SAM-binding methyltransferase superfamily. RNA methyltransferase TrmH family. TrmL subfamily. In terms of assembly, homodimer.

It localises to the cytoplasm. It catalyses the reaction cytidine(34) in tRNA + S-adenosyl-L-methionine = 2'-O-methylcytidine(34) in tRNA + S-adenosyl-L-homocysteine + H(+). It carries out the reaction 5-carboxymethylaminomethyluridine(34) in tRNA(Leu) + S-adenosyl-L-methionine = 5-carboxymethylaminomethyl-2'-O-methyluridine(34) in tRNA(Leu) + S-adenosyl-L-homocysteine + H(+). Methylates the ribose at the nucleotide 34 wobble position in the two leucyl isoacceptors tRNA(Leu)(CmAA) and tRNA(Leu)(cmnm5UmAA). Catalyzes the methyl transfer from S-adenosyl-L-methionine to the 2'-OH of the wobble nucleotide. The sequence is that of tRNA (cytidine(34)-2'-O)-methyltransferase from Haemophilus influenzae (strain ATCC 51907 / DSM 11121 / KW20 / Rd).